Reading from the N-terminus, the 35-residue chain is Flavodoxin (35 aa).

Residues 4-35 (IGLFYGTZTGKTESVAEIIDEFGDEVVTLDID) enclose the Flavodoxin-like domain.

This sequence belongs to the flavodoxin family. It depends on FMN as a cofactor.

In terms of biological role, low-potential electron donor to a number of redox enzymes. This chain is Flavodoxin, found in Nostoc sp. (strain MAC).